The following is a 715-amino-acid chain: SANT and BTB domain regulator of class switch recombination (715 aa).

The SANT domain occupies 21–59 (DMILCSLVGVPQPISWDSVARLVPGYTPKECAKRFEELK). Positions 146–254 (MVIHVCDEAK…ECIRYCHKNM (109 aa)) constitute a BTB domain. The segment covering 552–573 (SEEEDYTTGSEVTEDEVGDEEE) has biased composition (acidic residues). Disordered stretches follow at residues 552 to 623 (SEEE…VSLQ) and 689 to 715 (SAHS…GRPT). Residues 578 to 605 (QAGRKVKPKRSAKQTKKHISSPSIHKKE) show a composition bias toward basic residues. 2 stretches are compositionally biased toward polar residues: residues 614 to 623 (DSSPFTVSLQ) and 690 to 699 (AHSNTRQMNT).

It belongs to the KIAA1841 family. In terms of assembly, homodimer.

Negatively regulates class switch recombination or isotype switching in splenic B-cells. In Xenopus laevis (African clawed frog), this protein is SANT and BTB domain regulator of class switch recombination.